We begin with the raw amino-acid sequence, 210 residues long: Protein-L-isoaspartate O-methyltransferase (210 aa).

Serine 59 is an active-site residue.

Belongs to the methyltransferase superfamily. L-isoaspartyl/D-aspartyl protein methyltransferase family.

The protein resides in the cytoplasm. It catalyses the reaction [protein]-L-isoaspartate + S-adenosyl-L-methionine = [protein]-L-isoaspartate alpha-methyl ester + S-adenosyl-L-homocysteine. Functionally, catalyzes the methyl esterification of L-isoaspartyl residues in peptides and proteins that result from spontaneous decomposition of normal L-aspartyl and L-asparaginyl residues. It plays a role in the repair and/or degradation of damaged proteins. This is Protein-L-isoaspartate O-methyltransferase from Nitratidesulfovibrio vulgaris (strain ATCC 29579 / DSM 644 / CCUG 34227 / NCIMB 8303 / VKM B-1760 / Hildenborough) (Desulfovibrio vulgaris).